The following is a 256-amino-acid chain: MRRPVVMGNWKLNGSKAMVTELLTGLNAELEGVEGVDVAVAPPALYIDLAERLIAEGGNKIILGAQNTDLNNSGAFTGDMSPEMLKDFGATHIIIGHSERREYHNESDEFIAKKFNFLKENGLTPVFCIGESEAQNEAGETEAVCARQINAVIDTYGVEALNGAIIAYEPIWAIGTGKAATAEDAQRIHASIRALIAAKDEAVAAQVIIQYGGSVKPENAEAYFSQPDIDGALVGGASLDAKSFAAIAKAAAAAKA.

Position 9-11 (9-11 (NWK)) interacts with substrate. H97 serves as the catalytic Electrophile. The active-site Proton acceptor is the E169. Substrate contacts are provided by residues G175, S214, and 235–236 (GG).

Belongs to the triosephosphate isomerase family. As to quaternary structure, homodimer.

The protein localises to the cytoplasm. The enzyme catalyses D-glyceraldehyde 3-phosphate = dihydroxyacetone phosphate. It participates in carbohydrate biosynthesis; gluconeogenesis. It functions in the pathway carbohydrate degradation; glycolysis; D-glyceraldehyde 3-phosphate from glycerone phosphate: step 1/1. Involved in the gluconeogenesis. Catalyzes stereospecifically the conversion of dihydroxyacetone phosphate (DHAP) to D-glyceraldehyde-3-phosphate (G3P). The chain is Triosephosphate isomerase from Vibrio parahaemolyticus serotype O3:K6 (strain RIMD 2210633).